The primary structure comprises 61 residues: Short neurotoxin 1 (61 aa).

Intrachain disulfides connect C3–C23, C17–C40, C42–C53, and C54–C59.

The protein belongs to the three-finger toxin family. Short-chain subfamily. Type I alpha-neurotoxin sub-subfamily. Expressed by the venom gland.

It localises to the secreted. Functionally, binds to muscle nicotinic acetylcholine receptor (nAChR) and inhibit acetylcholine from binding to the receptor, thereby impairing neuromuscular transmission. In terms of biological role, produces peripheral paralysis by blocking neuromuscular transmission at the postsynaptic site. Binds to the muscular nicotinic acetylcholine receptor. The sequence is that of Short neurotoxin 1 from Naja annulifera (Banded Egyptian cobra).